A 265-amino-acid polypeptide reads, in one-letter code: Energy-coupling factor transporter transmembrane protein EcfT (265 aa).

A run of 6 helical transmembrane segments spans residues 26 to 46 (MVFVFIMMILIFLMNNWQTYA), 47 to 67 (VGIILIFIILKASNLSFMFLF), 72 to 92 (PILFLLIFTLLMHIFLTKGGA), 107 to 127 (VIMGIMISLRFILIIFLTTIM), 152 to 172 (LPVHELALMMSIALRFIPTLM), and 243 to 263 (HTYDTLSLLTLIPITLLILYL).

Belongs to the energy-coupling factor EcfT family. As to quaternary structure, forms a stable energy-coupling factor (ECF) transporter complex composed of 2 membrane-embedded substrate-binding proteins (S component), 2 ATP-binding proteins (A component) and 2 transmembrane proteins (T component). May be able to interact with more than 1 S component at a time.

The protein resides in the cell membrane. Transmembrane (T) component of an energy-coupling factor (ECF) ABC-transporter complex. Unlike classic ABC transporters this ECF transporter provides the energy necessary to transport a number of different substrates. This is Energy-coupling factor transporter transmembrane protein EcfT from Macrococcus caseolyticus (strain JCSC5402) (Macrococcoides caseolyticum).